Here is a 632-residue protein sequence, read N- to C-terminus: Arginine--tRNA ligase (632 aa).

The short motif at 120–130 (ANPIHPLHIGH) is the 'HIGH' region element.

The protein belongs to the class-I aminoacyl-tRNA synthetase family.

It localises to the cytoplasm. It catalyses the reaction tRNA(Arg) + L-arginine + ATP = L-arginyl-tRNA(Arg) + AMP + diphosphate. The protein is Arginine--tRNA ligase of Pyrobaculum islandicum (strain DSM 4184 / JCM 9189 / GEO3).